A 158-amino-acid polypeptide reads, in one-letter code: S-ribosylhomocysteine lyase (158 aa).

Fe cation-binding residues include His-54, His-58, and Cys-125.

Belongs to the LuxS family. In terms of assembly, homodimer. Fe cation serves as cofactor.

It catalyses the reaction S-(5-deoxy-D-ribos-5-yl)-L-homocysteine = (S)-4,5-dihydroxypentane-2,3-dione + L-homocysteine. Involved in the synthesis of autoinducer 2 (AI-2) which is secreted by bacteria and is used to communicate both the cell density and the metabolic potential of the environment. The regulation of gene expression in response to changes in cell density is called quorum sensing. Catalyzes the transformation of S-ribosylhomocysteine (RHC) to homocysteine (HC) and 4,5-dihydroxy-2,3-pentadione (DPD). The protein is S-ribosylhomocysteine lyase of Lactococcus lactis subsp. cremoris (strain MG1363).